We begin with the raw amino-acid sequence, 484 residues long: Probable cytochrome P450 508A1 (484 aa).

The chain crosses the membrane as a helical span at residues 1–21; sequence MALFEIIISLFVVYIIHNAIS. Cys428 contributes to the heme binding site.

Belongs to the cytochrome P450 family. Heme is required as a cofactor.

Its subcellular location is the membrane. In Dictyostelium discoideum (Social amoeba), this protein is Probable cytochrome P450 508A1 (cyp508A1-1).